Reading from the N-terminus, the 211-residue chain is Pyridoxine/pyridoxamine 5'-phosphate oxidase (211 aa).

Substrate is bound by residues 7 to 10 (RREY) and Lys65. Residues 60 to 65 (RTVLLK), 75 to 76 (YT), Arg81, Lys82, and Gln104 each bind FMN. Substrate-binding residues include Tyr122, Arg126, and Ser130. FMN contacts are provided by residues 139–140 (QS) and Trp184. Position 190–192 (190–192 (RLH)) interacts with substrate. Arg194 serves as a coordination point for FMN.

This sequence belongs to the pyridoxamine 5'-phosphate oxidase family. As to quaternary structure, homodimer. Requires FMN as cofactor.

The catalysed reaction is pyridoxamine 5'-phosphate + O2 + H2O = pyridoxal 5'-phosphate + H2O2 + NH4(+). It catalyses the reaction pyridoxine 5'-phosphate + O2 = pyridoxal 5'-phosphate + H2O2. Its pathway is cofactor metabolism; pyridoxal 5'-phosphate salvage; pyridoxal 5'-phosphate from pyridoxamine 5'-phosphate: step 1/1. It functions in the pathway cofactor metabolism; pyridoxal 5'-phosphate salvage; pyridoxal 5'-phosphate from pyridoxine 5'-phosphate: step 1/1. Catalyzes the oxidation of either pyridoxine 5'-phosphate (PNP) or pyridoxamine 5'-phosphate (PMP) into pyridoxal 5'-phosphate (PLP). This Aeromonas hydrophila subsp. hydrophila (strain ATCC 7966 / DSM 30187 / BCRC 13018 / CCUG 14551 / JCM 1027 / KCTC 2358 / NCIMB 9240 / NCTC 8049) protein is Pyridoxine/pyridoxamine 5'-phosphate oxidase.